Consider the following 730-residue polypeptide: Catalase-peroxidase (730 aa).

Residues 95–218 (WHSAGTYRVG…LAAVQMGLIY (124 aa)) constitute a cross-link (tryptophyl-tyrosyl-methioninium (Trp-Tyr) (with M-244)). Residue His96 is the Proton acceptor of the active site. The segment at residues 218–244 (YVNPEGPNGNPDPLGSAHDVRETFARM) is a cross-link (tryptophyl-tyrosyl-methioninium (Tyr-Met) (with W-95)). His259 lines the heme b pocket.

This sequence belongs to the peroxidase family. Peroxidase/catalase subfamily. Homodimer or homotetramer. Requires heme b as cofactor. Formation of the three residue Trp-Tyr-Met cross-link is important for the catalase, but not the peroxidase activity of the enzyme.

The catalysed reaction is H2O2 + AH2 = A + 2 H2O. It carries out the reaction 2 H2O2 = O2 + 2 H2O. Its function is as follows. Bifunctional enzyme with both catalase and broad-spectrum peroxidase activity. The protein is Catalase-peroxidase of Clostridium botulinum (strain Eklund 17B / Type B).